Consider the following 685-residue polypeptide: Potassium-transporting ATPase ATP-binding subunit (685 aa).

4 consecutive transmembrane segments (helical) span residues 36-56 (MFVVEVGFFVTILLTIFPSIF), 68-88 (LIVTIILFITVLFANFAESVA), 218-238 (IALNTILVSLTLIFLIVLVAL), and 255-275 (IALLVCLIPTTIGGLLSAIGI). Asp-306 acts as the 4-aspartylphosphate intermediate in catalysis. Residues Asp-343, Glu-347, 375-382 (FTAQTRMS), and Lys-394 contribute to the ATP site. Residues Asp-517 and Asp-521 each coordinate Mg(2+). A run of 3 helical transmembrane segments spans residues 587 to 607 (FAIIPAIFTIAIPKMQLMNIM), 615 to 635 (AILSALIFNAIIIPALIPIAM), and 654 to 674 (IVFGFGGIIVPFVGIKIIDMI).

The protein belongs to the cation transport ATPase (P-type) (TC 3.A.3) family. Type IA subfamily. In terms of assembly, the system is composed of three essential subunits: KdpA, KdpB and KdpC.

It is found in the cell membrane. It catalyses the reaction K(+)(out) + ATP + H2O = K(+)(in) + ADP + phosphate + H(+). Its function is as follows. Part of the high-affinity ATP-driven potassium transport (or Kdp) system, which catalyzes the hydrolysis of ATP coupled with the electrogenic transport of potassium into the cytoplasm. This subunit is responsible for energy coupling to the transport system and for the release of the potassium ions to the cytoplasm. The chain is Potassium-transporting ATPase ATP-binding subunit from Clostridium acetobutylicum (strain ATCC 824 / DSM 792 / JCM 1419 / IAM 19013 / LMG 5710 / NBRC 13948 / NRRL B-527 / VKM B-1787 / 2291 / W).